The following is a 195-amino-acid chain: Dehydrin DHN1 (195 aa).

The segment at 1–195 (MAEYGDQYGR…IKEKLPGGHH (195 aa)) is disordered. The span at 37–48 (YGTTGTTVGYGT) shows a compositional bias: low complexity. Residues 50 to 64 (QCVTTVTTGAQKTDQ) are compositionally biased toward polar residues. The span at 65 to 88 (YGTPGTTGAYGTDQYGTTGTTGEY) shows a compositional bias: low complexity. Basic and acidic residues-rich tracts occupy residues 136 to 153 (KEKI…DDQT) and 173 to 195 (SPEH…GGHH).

It belongs to the plant dehydrin family. Phosphorylated in vitro by CK2. In terms of tissue distribution, expressed in roots and leaves.

The protein resides in the cytoplasm. It localises to the nucleus. The sequence is that of Dehydrin DHN1 from Avicennia marina (Grey mangrove).